The sequence spans 367 residues: Peptide chain release factor 2 (367 aa).

An N5-methylglutamine modification is found at Gln-250.

The protein belongs to the prokaryotic/mitochondrial release factor family. In terms of processing, methylated by PrmC. Methylation increases the termination efficiency of RF2.

The protein resides in the cytoplasm. In terms of biological role, peptide chain release factor 2 directs the termination of translation in response to the peptide chain termination codons UGA and UAA. The sequence is that of Peptide chain release factor 2 from Kineococcus radiotolerans (strain ATCC BAA-149 / DSM 14245 / SRS30216).